We begin with the raw amino-acid sequence, 319 residues long: Class I histocompatibility antigen, Non-RT1.A alpha-1 chain (319 aa).

Positions 1–24 (MGAMAPRTLLLLLAAVLAPTQTWA) are cleaved as a signal peptide. An alpha-1 region spans residues 25-114 (GSHSLRYFHT…LLSYYNQSEG (90 aa)). The Extracellular segment spans residues 25-307 (GSHSLRYFHT…WEPSPSTDSN (283 aa)). N-linked (GlcNAc...) asparagine glycosylation is present at N110. Positions 115-206 (GSHTIQRMYG…ERGKETLLRS (92 aa)) are alpha-2. Cystine bridges form between C125/C188 and C227/C283. The segment at 207–298 (DPPEAHVTLH…GLPEPLSQRW (92 aa)) is alpha-3. An Ig-like C1-type domain is found at 209–295 (PEAHVTLHPR…EHEGLPEPLS (87 aa)). N280 is a glycosylation site (N-linked (GlcNAc...) asparagine). The interval 299–307 (EPSPSTDSN) is connecting peptide. A helical membrane pass occupies residues 308–319 (LLLLFLELWQFL).

Belongs to the MHC class I family. Heterodimer of an alpha chain and a beta chain (beta-2-microglobulin).

The protein localises to the membrane. Functionally, involved in the presentation of foreign antigens to the immune system. In Rattus norvegicus (Rat), this protein is Class I histocompatibility antigen, Non-RT1.A alpha-1 chain (RT1-Aw2).